A 360-amino-acid polypeptide reads, in one-letter code: Diacylglycerol O-acyltransferase 3 (360 aa).

The interval 153 to 182 (KAKAMKKMTEMDSESSSSSESSDSDCDKGK) is disordered. Positions 265, 270, 298, and 302 each coordinate [2Fe-2S] cluster.

The protein belongs to the diacylglycerol acyltransferase family. [2Fe-2S] cluster is required as a cofactor.

It catalyses the reaction an acyl-CoA + a 1,2-diacyl-sn-glycerol = a triacyl-sn-glycerol + CoA. Its pathway is glycerolipid metabolism; triacylglycerol biosynthesis. Involved in triacylglycerol (TAG) biosynthesis. Catalyzes the acylation of the sn-3 hydroxy group of sn-1,2-diacylglycerol using acyl-CoA. May preferentially use linolenoyl-CoA as substrate and to a lesser extent linoleoyl-CoA. May contribute to the active recycling of linoleate and linolenate into TAG when seed oil breakdown is blocked. The polypeptide is Diacylglycerol O-acyltransferase 3 (Arabidopsis thaliana (Mouse-ear cress)).